A 131-amino-acid polypeptide reads, in one-letter code: Mediator of RNA polymerase II transcription subunit 31 (131 aa).

An N-acetylalanine modification is found at Ala-2.

Belongs to the Mediator complex subunit 31 family. Component of the Mediator complex, which is composed of MED1, MED4, MED6, MED7, MED8, MED9, MED10, MED11, MED12, MED13, MED13L, MED14, MED15, MED16, MED17, MED18, MED19, MED20, MED21, MED22, MED23, MED24, MED25, MED26, MED27, MED29, MED30, MED31, CCNC, CDK8 and CDC2L6/CDK11. The MED12, MED13, CCNC and CDK8 subunits form a distinct module termed the CDK8 module. Mediator containing the CDK8 module is less active than Mediator lacking this module in supporting transcriptional activation. Individual preparations of the Mediator complex lacking one or more distinct subunits have been variously termed ARC, CRSP, DRIP, PC2, SMCC and TRAP.

The protein localises to the nucleus. Functionally, component of the Mediator complex, a coactivator involved in the regulated transcription of nearly all RNA polymerase II-dependent genes. Mediator functions as a bridge to convey information from gene-specific regulatory proteins to the basal RNA polymerase II transcription machinery. Mediator is recruited to promoters by direct interactions with regulatory proteins and serves as a scaffold for the assembly of a functional preinitiation complex with RNA polymerase II and the general transcription factors. The chain is Mediator of RNA polymerase II transcription subunit 31 (MED31) from Bos taurus (Bovine).